Here is an 803-residue protein sequence, read N- to C-terminus: Phosphoribosylformylglycinamidine synthase subunit PurL (803 aa).

Residue H65 is part of the active site. 2 residues coordinate ATP: Y68 and K107. Residue E109 coordinates Mg(2+). Substrate is bound by residues 110-113 (SHNH) and R132. The Proton acceptor role is filled by H111. D133 contributes to the Mg(2+) binding site. Q256 lines the substrate pocket. Residue D284 participates in Mg(2+) binding. Residue 328 to 330 (ESQ) coordinates substrate. Positions 537 and 574 each coordinate ATP. A Mg(2+)-binding site is contributed by N575. S577 contacts substrate.

It belongs to the FGAMS family. As to quaternary structure, monomer. Part of the FGAM synthase complex composed of 1 PurL, 1 PurQ and 2 PurS subunits.

The protein localises to the cytoplasm. It catalyses the reaction N(2)-formyl-N(1)-(5-phospho-beta-D-ribosyl)glycinamide + L-glutamine + ATP + H2O = 2-formamido-N(1)-(5-O-phospho-beta-D-ribosyl)acetamidine + L-glutamate + ADP + phosphate + H(+). The protein operates within purine metabolism; IMP biosynthesis via de novo pathway; 5-amino-1-(5-phospho-D-ribosyl)imidazole from N(2)-formyl-N(1)-(5-phospho-D-ribosyl)glycinamide: step 1/2. Functionally, part of the phosphoribosylformylglycinamidine synthase complex involved in the purines biosynthetic pathway. Catalyzes the ATP-dependent conversion of formylglycinamide ribonucleotide (FGAR) and glutamine to yield formylglycinamidine ribonucleotide (FGAM) and glutamate. The FGAM synthase complex is composed of three subunits. PurQ produces an ammonia molecule by converting glutamine to glutamate. PurL transfers the ammonia molecule to FGAR to form FGAM in an ATP-dependent manner. PurS interacts with PurQ and PurL and is thought to assist in the transfer of the ammonia molecule from PurQ to PurL. The sequence is that of Phosphoribosylformylglycinamidine synthase subunit PurL from Prochlorococcus marinus (strain NATL1A).